A 134-amino-acid polypeptide reads, in one-letter code: Large ribosomal subunit protein uL16c (134 aa).

The protein belongs to the universal ribosomal protein uL16 family. Part of the 50S ribosomal subunit.

It is found in the plastid. The protein resides in the chloroplast. This is Large ribosomal subunit protein uL16c from Gnetum parvifolium (Small-leaved jointfir).